A 147-amino-acid chain; its full sequence is Nucleoside diphosphate kinase (147 aa).

Lysine 9, arginine 85, threonine 91, arginine 102, and asparagine 112 together coordinate ATP. The Pros-phosphohistidine intermediate role is filled by histidine 115.

Belongs to the NDK family. Requires Mg(2+) as cofactor.

The enzyme catalyses a 2'-deoxyribonucleoside 5'-diphosphate + ATP = a 2'-deoxyribonucleoside 5'-triphosphate + ADP. It catalyses the reaction a ribonucleoside 5'-diphosphate + ATP = a ribonucleoside 5'-triphosphate + ADP. Major role in the synthesis of nucleoside triphosphates other than ATP. The ATP gamma phosphate is transferred to the NDP beta phosphate via a ping-pong mechanism, using a phosphorylated active-site intermediate. This chain is Nucleoside diphosphate kinase (NDK1), found in Encephalitozoon cuniculi (strain GB-M1) (Microsporidian parasite).